The chain runs to 347 residues: UDP-glucose 4-epimerase (347 aa).

NAD(+)-binding positions include 11–13 (GYI), 32–36 (DNFHN), 65–66 (DI), Phe-87, and Lys-91. 131–133 (SAT) lines the substrate pocket. Catalysis depends on Tyr-156, which acts as the Proton acceptor. NAD(+)-binding residues include Lys-160 and Tyr-184. Residues 184–186 (YFN), 205–207 (NNL), 223–225 (NVF), Arg-238, and 299–302 (REGD) each bind substrate.

This sequence belongs to the NAD(P)-dependent epimerase/dehydratase family. Homodimer. NAD(+) serves as cofactor.

The enzyme catalyses UDP-alpha-D-glucose = UDP-alpha-D-galactose. It catalyses the reaction UDP-N-acetyl-alpha-D-glucosamine = UDP-N-acetyl-alpha-D-galactosamine. It functions in the pathway carbohydrate metabolism; galactose metabolism. Catalyzes two distinct but analogous reactions: the reversible epimerization of UDP-glucose to UDP-galactose and the reversible epimerization of UDP-N-acetylglucosamine to UDP-N-acetylgalactosamine. The reaction with UDP-Gal plays a critical role in the Leloir pathway of galactose catabolism in which galactose is converted to the glycolytic intermediate glucose 6-phosphate. It contributes to the catabolism of dietary galactose and enables the endogenous biosynthesis of both UDP-Gal and UDP-GalNAc when exogenous sources are limited. Both UDP-sugar interconversions are important in the synthesis of glycoproteins and glycolipids. In Mus musculus (Mouse), this protein is UDP-glucose 4-epimerase (Gale).